A 44-amino-acid chain; its full sequence is U2-agatoxin-Ao1s (44 aa).

A propeptide spanning residues 1-9 (KKVYSFLKL) is cleaved from the precursor. Disulfide bonds link Cys-12–Cys-28, Cys-19–Cys-33, and Cys-27–Cys-43.

Belongs to the neurotoxin 01 (U2-agtx) family. Expressed by the venom gland.

It localises to the secreted. Functionally, insect active toxin causing rapid but reversible paralysis in crickets. No activity shown in mammals. Does not show effect on mammalian voltage-gated calcium channels. This chain is U2-agatoxin-Ao1s, found in Agelena orientalis (Funnel-web spider).